The following is a 325-amino-acid chain: Olfactory receptor 1S1 (325 aa).

At 1–38 (MKTFSSFLQIGRNMHQGNQTTITEFILLGFFKQDEHQN) the chain is on the extracellular side. N-linked (GlcNAc...) asparagine glycosylation is present at N18. A helical transmembrane segment spans residues 39 to 62 (LLFVLFLGMYLVTVIGNGLIIVAI). Over 63-70 (SLDTYLHT) the chain is Cytoplasmic. A helical transmembrane segment spans residues 71-92 (PMYLFLANLSFADISSISNSVP). Residues 93-113 (KMLVNIQTKSQSISYESCITQ) lie on the Extracellular side of the membrane. An intrachain disulfide couples C110 to C202. Residues 114-133 (MYFSIVFVVIDNLLLGTMAY) traverse the membrane as a helical segment. The Cytoplasmic segment spans residues 134–152 (DHFVAICHPLNYTILMRPR). The helical transmembrane segment at 153-171 (FGILLTVISWFLSNIIALT) threads the bilayer. The Extracellular portion of the chain corresponds to 172–208 (HTLLLIQLLFCNHNTLPHFFCDLAPLLKLSCSDTLIN). A helical transmembrane segment spans residues 209-232 (ELVLFIVGLSVIIFPFTLSFFSYV). Residues 233 to 249 (CIIRAVLRVSSTQGKWK) are Cytoplasmic-facing. A helical membrane pass occupies residues 250–272 (AFSTCGSHLTVVLLFYGTIVGVY). Topologically, residues 273–285 (FFPSSTHPEDTDK) are extracellular. Residues 286–305 (IGAVLFTVVTPMINPFIYSL) form a helical membrane-spanning segment. Residues 306 to 325 (RNKDMKGALRKLINRKISSL) are Cytoplasmic-facing.

Belongs to the G-protein coupled receptor 1 family.

The protein resides in the cell membrane. In terms of biological role, odorant receptor. The chain is Olfactory receptor 1S1 (OR1S1) from Homo sapiens (Human).